The primary structure comprises 240 residues: Protein Thf1 (240 aa).

The stretch at 186 to 222 forms a coiled coil; the sequence is KDLDLYRSNLEKVDQLLKVLEDAAEAERKKKEKQAAS. Residues 212–240 are disordered; the sequence is ERKKKEKQAASTTPAIEEAPVTTAESSES.

The protein belongs to the THF1 family.

May be involved in photosynthetic membrane biogenesis. The chain is Protein Thf1 from Synechocystis sp. (strain ATCC 27184 / PCC 6803 / Kazusa).